A 282-amino-acid chain; its full sequence is Thiazole synthase (282 aa).

Catalysis depends on Lys-113, which acts as the Schiff-base intermediate with DXP. 1-deoxy-D-xylulose 5-phosphate contacts are provided by residues Gly-174, 201–202 (AG), and 223–224 (NT).

This sequence belongs to the ThiG family. In terms of assembly, homotetramer. Forms heterodimers with either ThiH or ThiS.

The protein resides in the cytoplasm. It catalyses the reaction [ThiS sulfur-carrier protein]-C-terminal-Gly-aminoethanethioate + 2-iminoacetate + 1-deoxy-D-xylulose 5-phosphate = [ThiS sulfur-carrier protein]-C-terminal Gly-Gly + 2-[(2R,5Z)-2-carboxy-4-methylthiazol-5(2H)-ylidene]ethyl phosphate + 2 H2O + H(+). Its pathway is cofactor biosynthesis; thiamine diphosphate biosynthesis. Its function is as follows. Catalyzes the rearrangement of 1-deoxy-D-xylulose 5-phosphate (DXP) to produce the thiazole phosphate moiety of thiamine. Sulfur is provided by the thiocarboxylate moiety of the carrier protein ThiS. In vitro, sulfur can be provided by H(2)S. In Cupriavidus metallidurans (strain ATCC 43123 / DSM 2839 / NBRC 102507 / CH34) (Ralstonia metallidurans), this protein is Thiazole synthase.